A 341-amino-acid chain; its full sequence is Anthranilate phosphoribosyltransferase (341 aa).

5-phospho-alpha-D-ribose 1-diphosphate-binding positions include G79, 82 to 83, T87, 89 to 92, 107 to 115, and S119; these read GD, NIST, and KHGNRAASS. Position 79 (G79) interacts with anthranilate. S91 contacts Mg(2+). N110 is a binding site for anthranilate. R165 provides a ligand contact to anthranilate. 2 residues coordinate Mg(2+): D224 and E225.

The protein belongs to the anthranilate phosphoribosyltransferase family. In terms of assembly, homodimer. It depends on Mg(2+) as a cofactor.

The catalysed reaction is N-(5-phospho-beta-D-ribosyl)anthranilate + diphosphate = 5-phospho-alpha-D-ribose 1-diphosphate + anthranilate. It participates in amino-acid biosynthesis; L-tryptophan biosynthesis; L-tryptophan from chorismate: step 2/5. Its function is as follows. Catalyzes the transfer of the phosphoribosyl group of 5-phosphorylribose-1-pyrophosphate (PRPP) to anthranilate to yield N-(5'-phosphoribosyl)-anthranilate (PRA). In Dehalococcoides mccartyi (strain ATCC BAA-2266 / KCTC 15142 / 195) (Dehalococcoides ethenogenes (strain 195)), this protein is Anthranilate phosphoribosyltransferase.